We begin with the raw amino-acid sequence, 541 residues long: Kinesin light chain 1 (541 aa).

Residues 27–156 (KTKQVIQGLE…HLEFMNQLKK (130 aa)) adopt a coiled-coil conformation. The span at 156–176 (KYDDDISPSEDKDSDSSKEPL) shows a compositional bias: basic and acidic residues. The tract at residues 156 to 201 (KYDDDISPSEDKDSDSSKEPLDDLFPNDEDEPGQGIQHSDSSAAAA) is disordered. Ser-162 carries the phosphoserine modification. TPR repeat units follow at residues 211–244 (LRTLHNLVIQYASQGRYEVAVPSCKQALEDLEKT), 253–286 (ATMLNILALVYRDQNKYKDAANLLNDALAIREKT), 295–328 (AATLNNLAVLYGKRGKYKEAEPLCKRALEIREKV), 337–370 (AKQLNNLALLCQNQGKYEEVEYYYQRALGIYQTK), and 380–413 (AKTKNNLASCYLKQGKFKQAETLYKEILTRAHEA). Tyr-448 is modified (phosphotyrosine). Residue Ser-459 is modified to Phosphoserine. One copy of the TPR 6 repeat lies at 463-496 (TTTLKNLGALYRRQGKFEAAETLEEAAMRSRKQG). Positions 493 to 541 (RKQGLDNVHKQRVAEVLNDPESMEKRRSRESLNMDVVKYESGPDGGEEA) are disordered. 2 stretches are compositionally biased toward basic and acidic residues: residues 495–505 (QGLDNVHKQRV) and 514–524 (SMEKRRSRESL). 2 positions are modified to phosphoserine; by AMPK: Ser-520 and Ser-523.

This sequence belongs to the kinesin light chain family. In terms of assembly, oligomeric complex composed of two heavy chains and two light chains. Interacts with SPAG9. Interacts with ATCAY; may link mitochondria to KLC1 and regulate mitochondria localization into neuron projections. Interacts (via TPR repeats) with TOR1A; the interaction associates TOR1A with the kinesin oligomeric complex. Interacts with BORCS5. Interacts with MAPK8IP3/JIP3 and NTRK2/TRKB; interaction with NTRK2/TRKB is mediated by MAPK8IP3/JIP3. Interacts with CLSTN1; phosphorylation at Ser-459 inhibits interaction with CLSTN1. Post-translationally, phosphorylation at Ser-459 by ERK inhibits interaction with CLSTN1 and localization to cytoplasmic vesicles.

The protein localises to the cell projection. It localises to the growth cone. It is found in the cytoplasmic vesicle. The protein resides in the cytoplasm. Its subcellular location is the cytoskeleton. In terms of biological role, kinesin is a microtubule-associated force-producing protein that may play a role in organelle transport. The light chain may function in coupling of cargo to the heavy chain or in the modulation of its ATPase activity. This chain is Kinesin light chain 1 (Klc1), found in Mus musculus (Mouse).